Consider the following 20-residue polypeptide: Non-specific lipid-transfer protein-like protein (20 aa).

The protein belongs to the plant LTP family.

The chain is Non-specific lipid-transfer protein-like protein from Jatropha curcas (Barbados nut).